The chain runs to 101 residues: DNA-directed RNA polymerase subunit beta (101 aa).

Residues 74-101 form a disordered region; sequence KRRLSALGPGGLSRERAGLEVRDVHSSH. The span at 86–101 shows a compositional bias: basic and acidic residues; sequence SRERAGLEVRDVHSSH.

The protein belongs to the RNA polymerase beta chain family. The RNAP catalytic core consists of 2 alpha, 1 beta, 1 beta' and 1 omega subunit. When a sigma factor is associated with the core the holoenzyme is formed, which can initiate transcription.

It carries out the reaction RNA(n) + a ribonucleoside 5'-triphosphate = RNA(n+1) + diphosphate. Its function is as follows. DNA-dependent RNA polymerase catalyzes the transcription of DNA into RNA using the four ribonucleoside triphosphates as substrates. In Mycolicibacterium peregrinum (Mycobacterium peregrinum), this protein is DNA-directed RNA polymerase subunit beta (rpoB).